We begin with the raw amino-acid sequence, 229 residues long: 5'-methylthioadenosine/S-adenosylhomocysteine nucleosidase (229 aa).

Glu-12 functions as the Proton acceptor in the catalytic mechanism. Substrate contacts are provided by residues Gly-78, Ile-152, and 173-174 (ME). The Proton donor role is filled by Asp-197.

It belongs to the PNP/UDP phosphorylase family. MtnN subfamily.

It carries out the reaction S-adenosyl-L-homocysteine + H2O = S-(5-deoxy-D-ribos-5-yl)-L-homocysteine + adenine. The catalysed reaction is S-methyl-5'-thioadenosine + H2O = 5-(methylsulfanyl)-D-ribose + adenine. It catalyses the reaction 5'-deoxyadenosine + H2O = 5-deoxy-D-ribose + adenine. It functions in the pathway amino-acid biosynthesis; L-methionine biosynthesis via salvage pathway; S-methyl-5-thio-alpha-D-ribose 1-phosphate from S-methyl-5'-thioadenosine (hydrolase route): step 1/2. Its function is as follows. Catalyzes the irreversible cleavage of the glycosidic bond in both 5'-methylthioadenosine (MTA) and S-adenosylhomocysteine (SAH/AdoHcy) to adenine and the corresponding thioribose, 5'-methylthioribose and S-ribosylhomocysteine, respectively. Also cleaves 5'-deoxyadenosine, a toxic by-product of radical S-adenosylmethionine (SAM) enzymes, into 5-deoxyribose and adenine. In Pasteurella multocida (strain Pm70), this protein is 5'-methylthioadenosine/S-adenosylhomocysteine nucleosidase.